The sequence spans 376 residues: Queuine tRNA-ribosyltransferase (376 aa).

D90 serves as the catalytic Proton acceptor. Substrate is bound by residues D90–F94, D144, Q193, and G220. The interval G251–D257 is RNA binding. D270 (nucleophile) is an active-site residue. Residues T275 to R279 form an RNA binding; important for wobble base 34 recognition region. Residues C308, C310, C313, and H339 each contribute to the Zn(2+) site.

It belongs to the queuine tRNA-ribosyltransferase family. In terms of assembly, homodimer. Within each dimer, one monomer is responsible for RNA recognition and catalysis, while the other monomer binds to the replacement base PreQ1. Zn(2+) is required as a cofactor.

The catalysed reaction is 7-aminomethyl-7-carbaguanine + guanosine(34) in tRNA = 7-aminomethyl-7-carbaguanosine(34) in tRNA + guanine. The protein operates within tRNA modification; tRNA-queuosine biosynthesis. Its function is as follows. Catalyzes the base-exchange of a guanine (G) residue with the queuine precursor 7-aminomethyl-7-deazaguanine (PreQ1) at position 34 (anticodon wobble position) in tRNAs with GU(N) anticodons (tRNA-Asp, -Asn, -His and -Tyr). Catalysis occurs through a double-displacement mechanism. The nucleophile active site attacks the C1' of nucleotide 34 to detach the guanine base from the RNA, forming a covalent enzyme-RNA intermediate. The proton acceptor active site deprotonates the incoming PreQ1, allowing a nucleophilic attack on the C1' of the ribose to form the product. After dissociation, two additional enzymatic reactions on the tRNA convert PreQ1 to queuine (Q), resulting in the hypermodified nucleoside queuosine (7-(((4,5-cis-dihydroxy-2-cyclopenten-1-yl)amino)methyl)-7-deazaguanosine). The polypeptide is Queuine tRNA-ribosyltransferase (Cupriavidus necator (strain ATCC 17699 / DSM 428 / KCTC 22496 / NCIMB 10442 / H16 / Stanier 337) (Ralstonia eutropha)).